The chain runs to 100 residues: MGALTKADMAERLYQEVGLNKREAKEMVEAFFDEVRDALSHNEQVKLSGFGNFDLRDKKQRPGRNPKTGEEIPITARRVVTFRPGQKLKAKVEAYAGTQS.

Belongs to the bacterial histone-like protein family. In terms of assembly, heterodimer of an alpha and a beta chain.

Its function is as follows. This protein is one of the two subunits of integration host factor, a specific DNA-binding protein that functions in genetic recombination as well as in transcriptional and translational control. In Hahella chejuensis (strain KCTC 2396), this protein is Integration host factor subunit alpha.